The primary structure comprises 512 residues: Extracellular serine/threonine protein kinase CeFam20 (512 aa).

Topologically, residues 1 to 6 are cytoplasmic; it reads MRCNIK. A helical; Signal-anchor for type II membrane protein transmembrane segment spans residues 7 to 26; it reads RLFTLAIGVFAATLVIISFS. At 27 to 512 the chain is on the lumenal side; it reads KDNYEREWKQ…QDKKDDKKTV (486 aa). An intrachain disulfide couples Cys110 to Cys144. Residue Asn113 is glycosylated (N-linked (GlcNAc...) asparagine). Positions 176, 192, and 213 each coordinate ATP. Residue Glu213 participates in Mn(2+) binding. Residue Asn242 is glycosylated (N-linked (GlcNAc...) asparagine). Disulfide bonds link Cys268-Cys284 and Cys273-Cys277. An ATP-binding site is contributed by 295 to 298; the sequence is QVFL. 2 cysteine pairs are disulfide-bonded: Cys333–Cys409 and Cys410–Cys469. Residue Asp366 is part of the active site. Glu371 and Asp387 together coordinate ATP. Asp387 serves as a coordination point for Mn(2+). The interval 486–512 is disordered; the sequence is PDVSDAEQNDEEQSEEHQDKKDDKKTV. The segment covering 489–499 has biased composition (acidic residues); it reads SDAEQNDEEQS. Residues 500 to 512 are compositionally biased toward basic and acidic residues; sequence EEHQDKKDDKKTV.

This sequence belongs to the FAM20 family. It depends on Mn(2+) as a cofactor.

The protein resides in the golgi apparatus membrane. The protein localises to the secreted. It catalyses the reaction L-seryl-[protein] + ATP = O-phospho-L-seryl-[protein] + ADP + H(+). The enzyme catalyses L-threonyl-[protein] + ATP = O-phospho-L-threonyl-[protein] + ADP + H(+). Golgi serine/threonine protein kinase that phosphorylates secretory pathway proteins within Ser-x-Glu/pSer motifs. The chain is Extracellular serine/threonine protein kinase CeFam20 from Caenorhabditis elegans.